Reading from the N-terminus, the 142-residue chain is Large ribosomal subunit protein uL13 (142 aa).

The protein belongs to the universal ribosomal protein uL13 family. As to quaternary structure, part of the 50S ribosomal subunit.

Functionally, this protein is one of the early assembly proteins of the 50S ribosomal subunit, although it is not seen to bind rRNA by itself. It is important during the early stages of 50S assembly. The sequence is that of Large ribosomal subunit protein uL13 from Opitutus terrae (strain DSM 11246 / JCM 15787 / PB90-1).